A 568-amino-acid polypeptide reads, in one-letter code: MPFGKPLVGTLLASLTLLGLATAHAKDDMKAAEQYQGAASAVDPAHVVRTNGAPDMSESEFNEAKQIYFQRCAGCHGVLRKGATGKPLTPDITQQRGQQYLEALITYGTPLGMPNWGSSGELSKEQITLMAKYIQHTPPQPPEWGMPEMRESWKVLVKPEDRPKKQLNDLDLPNLFSVTLRDAGQIALVDGDSKKIVKVIDTGYAVHISRMSASGRYLLVIGRDARIDMIDLWAKEPTKVAEIKIGIEARSVESSKFKGYEDRYTIAGAYWPPQFAIMDGETLEPKQIVSTRGMTVDTQTYHPEPRVAAIIASHEHPEFIVNVKETGKVLLVNYKDIDNLTVTSIGAAPFLHDGGWDSSHRYFMTAANNSNKVAVIDSKDRRLSALVDVGKTPHPGRGANFVHPKYGPVWSTSHLGDGSISLIGTDPKNHPQYAWKKVAELQGQGGGSLFIKTHPKSSHLYVDTTFNPDARISQSVAVFDLKNLDAKYQVLPIAEWADLGEGAKRVVQPEYNKRGDEVWFSVWNGKNDSSALVVVDDKTLKLKAVVKDPRLITPTGKFNVYNTQHDVY.

The signal sequence occupies residues 1–25 (MPFGKPLVGTLLASLTLLGLATAHA). An N-terminal tail region spans residues 26 to 54 (KDDMKAAEQYQGAASAVDPAHVVRTNGAP). One can recognise a Cytochrome c domain in the interval 55–140 (DMSESEFNEA…AKYIQHTPPQ (86 aa)). Residues Cys-72, Cys-75, His-76, Arg-96, Thr-109, and Met-113 each coordinate heme c. Residues 141 to 568 (PPEWGMPEMR…NVYNTQHDVY (428 aa)) are D1-heme domain. Positions 207, 250, 251, 270, 397, and 508 each coordinate heme d1.

Homodimer. Heme c serves as cofactor. The cofactor is heme.

It is found in the periplasm. It carries out the reaction nitric oxide + Fe(III)-[cytochrome c] + H2O = Fe(II)-[cytochrome c] + nitrite + 2 H(+). The catalysed reaction is A + NH4(+) + H2O = hydroxylamine + AH2 + H(+). The sequence is that of Nitrite reductase (nirS) from Pseudomonas aeruginosa (strain ATCC 15692 / DSM 22644 / CIP 104116 / JCM 14847 / LMG 12228 / 1C / PRS 101 / PAO1).